The following is an 801-amino-acid chain: MGFSPFLDECRAEGLWPIGPSCNKIISFGVYTFFIVVNFIVLCIPNSNSANNNYRRMTDDDASSTSKLTISKILSICTIFAVICQSIFYFCFTFYFHPYTHLLLAFCVSKLFFWILSLCSFSKWRNQPSTPISLAFAFSAALLIHCIPLTDWKKYFEPTSKNRGDLTFYIIELALVTVVFFFTIVTGLFNFSGCSSRESAWNNLSKKVVTVAPYIWPTKSISLQLRVVFCLFLLIIGRLINVSLPILSKWIVDELATPDTFQYSLLFLATFLKFLQGNGAMGGFLNTVRTYLWIPIQQYTTRELEVELFKHLHSLSLRWHLSRKTGQVLRVMDRGTSSVNNILNYILFNVVPTIADIVIAVIFFFSAFNAYFGLIVFGTMALYLTVTISITEWRTQYIREANEKDNATSAIATDSLINYETVKYYGNEEFEVNRFKNAIESYQVTEWKTQASLAFLNCLQNAIIGIGMIGGSVFVVYMIVHEKTLTVGDYVLFTTYLLQLYTPLNFFGTIYRVIQKAFVDMENMFDLMNDEVEVKDLPHALPYTDPRGTISVKNLTFEYNTGLPVIKNISFEIGNGQTVALVGSSGSGKSTLIRLLFRLFESTEGSIEFDGIDVRNYTMHSLRQQIGIVPQDTVLFNDTIMYNIRFGRPDASDEEVIEAAKAAMIHEKITSLPEGYATMVGERGLKLSGGEKQRVAIARTILKKPQFIFLDEATSALDTPTERAIQKCLEKLCKSRTGVVVAHRLSTVVNADLILVLDKGIILERGNHKELLAQQGTYASMWEAQIAEQRAKSIELGEELP.

At methionine 1 to lysine 24 the chain is on the lumenal side. Residues isoleucine 25–proline 45 form a helical membrane-spanning segment. Residues asparagine 46–serine 75 lie on the Cytoplasmic side of the membrane. Residues isoleucine 76–phenylalanine 96 traverse the membrane as a helical segment. Residues histidine 97–histidine 101 lie on the Lumenal side of the membrane. A helical membrane pass occupies residues leucine 102 to serine 122. Topologically, residues lysine 123 to serine 129 are cytoplasmic. The helical transmembrane segment at threonine 130–threonine 150 threads the bilayer. The Lumenal portion of the chain corresponds to aspartate 151–threonine 167. The helical transmembrane segment at phenylalanine 168–leucine 188 threads the bilayer. At phenylalanine 189–arginine 226 the chain is on the cytoplasmic side. The chain crosses the membrane as a helical span at residues valine 227–leucine 247. One can recognise an ABC transmembrane type-1 domain in the interval valine 227–lysine 516. At serine 248 to serine 264 the chain is on the lumenal side. The helical transmembrane segment at leucine 265–leucine 285 threads the bilayer. The Cytoplasmic segment spans residues asparagine 286 to asparagine 341. Residues isoleucine 342–phenylalanine 364 form a helical membrane-spanning segment. Topologically, residues phenylalanine 365–tyrosine 371 are lumenal. A helical transmembrane segment spans residues phenylalanine 372–isoleucine 390. At threonine 391 to asparagine 461 the chain is on the cytoplasmic side. Residues alanine 462 to glutamate 482 form a helical membrane-spanning segment. Topologically, residues lysine 483–aspartate 489 are lumenal. A helical membrane pass occupies residues tyrosine 490 to isoleucine 510. At tyrosine 511–proline 801 the chain is on the cytoplasmic side. The region spanning isoleucine 550–alanine 784 is the ABC transporter domain. Residue glycine 583–serine 590 participates in ATP binding.

Belongs to the ABC transporter superfamily. ABCB family. Heavy Metal importer (TC 3.A.1.210) subfamily. As to expression, expressed in coelomocytes, as well as in head and tail neurons, and in the intestinal cells.

It localises to the vacuole membrane. It is found in the early endosome. Its subcellular location is the late endosome. The protein localises to the recycling endosome. Its function is as follows. May play a pivotal role in the detoxification of heavy metals such as cadmium but do not depend exclusively on phytochelatins (PC) synthesis. The chain is Heavy metal tolerance factor 1 from Caenorhabditis elegans.